A 3527-amino-acid polypeptide reads, in one-letter code: BEACH domain-containing protein A2 (3527 aa).

Disordered regions lie at residues 25–46, 385–423, and 454–490; these read AGEA…PSSS, SSPH…LNSR, and ESSG…CEQG. A compositionally biased stretch (low complexity) spans 28 to 46; it reads AISDPTTPPSSSQASPSSS. Low complexity predominate over residues 455–469; that stretch reads SSGTSTSLLSQTKLT. A compositionally biased stretch (polar residues) spans 472 to 481; sequence SRRQTPSANN. LRR repeat units follow at residues 1447–1470, 1499–1522, 1542–1565, 1566–1588, and 2001–2024; these read KLES…NYED, FSHL…VLSN, SIQI…SHNL, AILR…DVEV, and SSEM…SRSS. Disordered stretches follow at residues 1992–2023 and 2046–2081; these read GDHV…DSRS and IPSP…SQGS. Residues 1998–2020 show a composition bias toward polar residues; the sequence is VSASSEMKSLDLTGSSSQVQPID. 3 LRR repeats span residues 2128 to 2151, 2221 to 2247, and 2313 to 2336; these read TEQI…VDPE, LLSI…LLSI, and VSAV…LDTD. Residues 2658-2680 form a disordered region; it reads VNTDEKSETGSPIKSSSGKMDEI. A compositionally biased stretch (polar residues) spans 2666-2675; that stretch reads TGSPIKSSSG. The 168-residue stretch at 2704-2871 folds into the BEACH-type PH domain; sequence EHLEKIRFRY…EREEVFRNLL (168 aa). Positions 2896-3188 constitute a BEACH domain; it reads GSRLFKLMAK…QLFQKPHVKR (293 aa). 4 WD repeats span residues 3272 to 3311, 3322 to 3361, 3410 to 3451, and 3483 to 3522; these read HEGN…PRGS, AHTA…FVRQ, DLIV…DPVS, and FHKQ…LKAS.

The chain is BEACH domain-containing protein A2 from Arabidopsis thaliana (Mouse-ear cress).